The sequence spans 211 residues: Thiamine-phosphate synthase (211 aa).

Residues 35–39 (QLRDK) and Asn67 each bind 4-amino-2-methyl-5-(diphosphooxymethyl)pyrimidine. 2 residues coordinate Mg(2+): Asp68 and Asp87. 4-amino-2-methyl-5-(diphosphooxymethyl)pyrimidine is bound at residue Ser106. 132–134 (TGS) is a 2-[(2R,5Z)-2-carboxy-4-methylthiazol-5(2H)-ylidene]ethyl phosphate binding site. Lys135 contributes to the 4-amino-2-methyl-5-(diphosphooxymethyl)pyrimidine binding site. Residues Gly163 and 183–184 (IS) contribute to the 2-[(2R,5Z)-2-carboxy-4-methylthiazol-5(2H)-ylidene]ethyl phosphate site.

It belongs to the thiamine-phosphate synthase family. Mg(2+) serves as cofactor.

It catalyses the reaction 2-[(2R,5Z)-2-carboxy-4-methylthiazol-5(2H)-ylidene]ethyl phosphate + 4-amino-2-methyl-5-(diphosphooxymethyl)pyrimidine + 2 H(+) = thiamine phosphate + CO2 + diphosphate. The enzyme catalyses 2-(2-carboxy-4-methylthiazol-5-yl)ethyl phosphate + 4-amino-2-methyl-5-(diphosphooxymethyl)pyrimidine + 2 H(+) = thiamine phosphate + CO2 + diphosphate. The catalysed reaction is 4-methyl-5-(2-phosphooxyethyl)-thiazole + 4-amino-2-methyl-5-(diphosphooxymethyl)pyrimidine + H(+) = thiamine phosphate + diphosphate. Its pathway is cofactor biosynthesis; thiamine diphosphate biosynthesis; thiamine phosphate from 4-amino-2-methyl-5-diphosphomethylpyrimidine and 4-methyl-5-(2-phosphoethyl)-thiazole: step 1/1. Its function is as follows. Condenses 4-methyl-5-(beta-hydroxyethyl)thiazole monophosphate (THZ-P) and 2-methyl-4-amino-5-hydroxymethyl pyrimidine pyrophosphate (HMP-PP) to form thiamine monophosphate (TMP). The sequence is that of Thiamine-phosphate synthase from Methanoculleus marisnigri (strain ATCC 35101 / DSM 1498 / JR1).